Here is a 68-residue protein sequence, read N- to C-terminus: Small ribosomal subunit protein bS21 (68 aa).

Belongs to the bacterial ribosomal protein bS21 family.

The chain is Small ribosomal subunit protein bS21 from Dinoroseobacter shibae (strain DSM 16493 / NCIMB 14021 / DFL 12).